The primary structure comprises 627 residues: Pentatricopeptide repeat-containing protein At2g15630, mitochondrial (627 aa).

A mitochondrion-targeting transit peptide spans 1–29; it reads MRRFTVPCILRHRISILSGAGYSPAAARL. PPR repeat units lie at residues 154 to 188, 189 to 223, 224 to 258, 259 to 293, 294 to 324, 326 to 360, 361 to 395, 396 to 430, 431 to 465, 466 to 500, 501 to 535, 536 to 570, and 571 to 605; these read STILFDLLVRCCCQLRMVDEAIECFYLMKEKGFYP, KTETCNHILTLLSRLNRIENAWVFYADMYRMEIKS, NVYTFNIMINVLCKEGKLKKAKGFLGIMEVFGIKP, TIVTYNTLVQGFSLRGRIEGARLIISEMKSKGFQP, DMQTYNPILSWMCNEGRASEVLREMKEIGLV, DSVSYNILIRGCSNNGDLEMAFAYRDEMVKQGMVP, TFYTYNTLIHGLFMENKIEAAEILIREIREKGIVL, DSVTYNILINGYCQHGDAKKAFALHDEMMTDGIQP, TQFTYTSLIYVLCRKNKTREADELFEKVVGKGMKP, DLVMMNTLMDGHCAIGNMDRAFSLLKEMDMMSINP, DDVTYNCLMRGLCGEGKFEEARELMGEMKRRGIKP, DHISYNTLISGYSKKGDTKHAFMVRDEMLSLGFNP, and TLLTYNALLKGLSKNQEGELAEELLREMKSEGIVP.

It belongs to the PPR family. P subfamily.

It localises to the mitochondrion. The protein is Pentatricopeptide repeat-containing protein At2g15630, mitochondrial of Arabidopsis thaliana (Mouse-ear cress).